The sequence spans 607 residues: UvrABC system protein C (607 aa).

The 79-residue stretch at 11 to 89 (CKPGVYRFED…IKEFAPPCNV (79 aa)) folds into the GIY-YIG domain. A UVR domain is found at 201–236 (SSLLESLKKKMLKASKNKEYEEAAILRDKIQAAQTV).

Belongs to the UvrC family. In terms of assembly, interacts with UvrB in an incision complex.

It is found in the cytoplasm. In terms of biological role, the UvrABC repair system catalyzes the recognition and processing of DNA lesions. UvrC both incises the 5' and 3' sides of the lesion. The N-terminal half is responsible for the 3' incision and the C-terminal half is responsible for the 5' incision. This chain is UvrABC system protein C, found in Tropheryma whipplei (strain Twist) (Whipple's bacillus).